The chain runs to 125 residues: Fluoride-specific ion channel FluC (125 aa).

Transmembrane regions (helical) follow at residues 3–23, 33–53, 65–85, and 99–119; these read FILI…VSKV, IPLG…FVLF, FVLF…TFAY, and LVYF…GMVL. 2 residues coordinate Na(+): Gly-75 and Thr-78.

Belongs to the fluoride channel Fluc/FEX (TC 1.A.43) family.

The protein localises to the cell inner membrane. The catalysed reaction is fluoride(in) = fluoride(out). Na(+) is not transported, but it plays an essential structural role and its presence is essential for fluoride channel function. Functionally, fluoride-specific ion channel. Important for reducing fluoride concentration in the cell, thus reducing its toxicity. This chain is Fluoride-specific ion channel FluC, found in Thermosipho melanesiensis (strain DSM 12029 / CIP 104789 / BI429).